A 25-amino-acid polypeptide reads, in one-letter code: Phospholipase A1 verutoxin-2a (25 aa).

It belongs to the AB hydrolase superfamily. Lipase family. Post-translationally, contains six disulfide bonds. As to expression, expressed by the venom gland.

It localises to the secreted. It carries out the reaction a 1,2-diacyl-sn-glycero-3-phosphocholine + H2O = a 2-acyl-sn-glycero-3-phosphocholine + a fatty acid + H(+). It catalyses the reaction 1-(9Z-octadecenoyl)-2-hexadecanoyl-sn-glycero-3-phosphocholine + H2O = 2-hexadecanoyl-sn-glycero-3-phosphocholine + (9Z)-octadecenoate + H(+). The enzyme catalyses a 1-acyl-sn-glycero-3-phosphocholine + H2O = sn-glycerol 3-phosphocholine + a fatty acid + H(+). It functions in the pathway phospholipid metabolism. Its activity is regulated as follows. Activity is maximal in the presence of calcium. However, unlike phospholipases A2 whose catalytic activity is strictly calcium-dependent, this enzyme shows considerable catalytic activity on phosphatidylcholine emulsified in calcium free solution; the catalytic activity of VT-2a assayed in the absence of calcium ions is 18-20% of that assayed in solution containing calcium ions. Functionally, catalyzes the hydrolysis of glycerophospholipids such as phosphatidylcholine (1,2-diacyl-sn-glycero-3-phosphocholine) and has a moderate activity to hydrolyze lysoglycerophospholipids such as lysophosphatidylcholine (1-acyl-sn-glycero-3-phosphocholine), but is unable to hydrolyze sphingomyelin. In addition to acting as an allergen, it possesses a potent hemolytic activity on red blood cells of mice (98.8% of hemolysis at 3.0 ug/ml). The protein is Phospholipase A1 verutoxin-2a of Vespa velutina (Asian yellow-legged hornet).